Consider the following 767-residue polypeptide: General transcription and DNA repair factor IIH helicase/translocase subunit XPB1 (767 aa).

Positions 1-51 (MGNGERGRPNKKMKYGGKDDQKMKNIQNAEDYYDDADEDSRDGEGEEKKRD) are disordered. Residues 31 to 41 (DYYDDADEDSR) show a composition bias toward acidic residues. Residues 42-51 (DGEGEEKKRD) are compositionally biased toward basic and acidic residues. The Helicase ATP-binding domain occupies 293 to 455 (MFGNGRARSG…DLNFLIGPKL (163 aa)). An ATP-binding site is contributed by 306 to 313 (LPCGAGKS). Residues 408–411 (DEVH) carry the DEVH box motif. The region spanning 510–676 (RACEFLIRFH…SLPPPDAGSS (167 aa)) is the Helicase C-terminal domain. The disordered stretch occupies residues 742 to 767 (RHKSGQQFKKPKDPTKRHNLFKKRYV). Positions 750–766 (KKPKDPTKRHNLFKKRY) match the Nuclear localization signal motif. Basic residues predominate over residues 758–767 (RHNLFKKRYV).

The protein belongs to the helicase family. RAD25/XPB subfamily. Component of the 7-subunit TFIIH core complex composed of XPB, XPD, TFB1/GTF2H1, GTF2H2/P44, TFB4/GTF2H3, TFB2/GTF2H4 and TFB5/GTF2H5, which is active in NER. The core complex associates with the 3-subunit CDK-activating kinase (CAK) module composed of CYCH1/cyclin H1, CDKD and MAT1/At4g30820 to form the 10-subunit holoenzyme (holo-TFIIH) active in transcription. Expressed ubiquitously.

It localises to the nucleus. It carries out the reaction Couples ATP hydrolysis with the unwinding of duplex DNA by translocating in the 3'-5' direction.. The enzyme catalyses ATP + H2O = ADP + phosphate + H(+). ATP-dependent 3'-5' DNA helicase/translocase; binds dsDNA rather than ssDNA, unzipping it in a translocase rather than classical helicase activity. Component of the general transcription and DNA repair factor IIH (TFIIH) core complex. When complexed to CDK-activating kinase (CAK), involved in RNA transcription by RNA polymerase II. The ATPase activity of XPB/ERCC3, but not its helicase activity, is required for DNA opening; it may wrap around the damaged DNA wedging it open, causing localized melting and twisting that allows XPD/ERCC2 helicase to anchor. The ATP-dependent helicase activity of XPB/ERCC3 may be required for promoter escape. Also involved in transcription-coupled nucleotide excision repair (NER) of damaged DNA. In NER, TFIIH acts by opening DNA around the lesion to allow the excision of the damaged oligonucleotide and its replacement by a new DNA fragment. The structure of the TFIIH transcription complex differs from the NER-TFIIH complex. Partially complements UV sensitivity of a yeast SSL2 mutation. Required during the early stages of development, including seed germination. In Arabidopsis thaliana (Mouse-ear cress), this protein is General transcription and DNA repair factor IIH helicase/translocase subunit XPB1 (XPB1).